The chain runs to 286 residues: Shikimate dehydrogenase (NADP(+)) (286 aa).

Residues 20–22 and Thr-67 each bind shikimate; that span reads SLS. Lys-71 (proton acceptor) is an active-site residue. Shikimate contacts are provided by Asn-92 and Asp-107. NADP(+) contacts are provided by residues 132-136 and Met-228; that span reads GAGGA. Tyr-230 lines the shikimate pocket. Residue Gly-251 coordinates NADP(+).

The protein belongs to the shikimate dehydrogenase family. Homodimer.

It catalyses the reaction shikimate + NADP(+) = 3-dehydroshikimate + NADPH + H(+). It functions in the pathway metabolic intermediate biosynthesis; chorismate biosynthesis; chorismate from D-erythrose 4-phosphate and phosphoenolpyruvate: step 4/7. Its function is as follows. Involved in the biosynthesis of the chorismate, which leads to the biosynthesis of aromatic amino acids. Catalyzes the reversible NADPH linked reduction of 3-dehydroshikimate (DHSA) to yield shikimate (SA). The protein is Shikimate dehydrogenase (NADP(+)) of Geobacter metallireducens (strain ATCC 53774 / DSM 7210 / GS-15).